We begin with the raw amino-acid sequence, 71 residues long: Non-structural protein 3a (71 aa).

The polypeptide is Non-structural protein 3a (Canis lupus familiaris (Dog)).